Consider the following 351-residue polypeptide: Ion-translocating oxidoreductase complex subunit D (351 aa).

4 helical membrane passes run I18–G38, G40–L60, L87–A107, and P121–L141. Residue T185 is modified to FMN phosphoryl threonine. Helical transmembrane passes span V211 to L231, I241 to P261, F264 to A284, L298 to P318, and G320 to Q340.

The protein belongs to the NqrB/RnfD family. In terms of assembly, the complex is composed of six subunits: RnfA, RnfB, RnfC, RnfD, RnfE and RnfG. Requires FMN as cofactor.

It is found in the cell inner membrane. Its function is as follows. Part of a membrane-bound complex that couples electron transfer with translocation of ions across the membrane. This Yersinia pseudotuberculosis serotype O:1b (strain IP 31758) protein is Ion-translocating oxidoreductase complex subunit D.